Here is a 449-residue protein sequence, read N- to C-terminus: Exodeoxyribonuclease 7 large subunit (449 aa).

This sequence belongs to the XseA family. Heterooligomer composed of large and small subunits.

The protein resides in the cytoplasm. It catalyses the reaction Exonucleolytic cleavage in either 5'- to 3'- or 3'- to 5'-direction to yield nucleoside 5'-phosphates.. Functionally, bidirectionally degrades single-stranded DNA into large acid-insoluble oligonucleotides, which are then degraded further into small acid-soluble oligonucleotides. This Lacticaseibacillus casei (strain BL23) (Lactobacillus casei) protein is Exodeoxyribonuclease 7 large subunit.